The following is a 193-amino-acid chain: Probable oligoribonuclease (193 aa).

The region spanning I15–L177 is the Exonuclease domain. Residue Y136 is part of the active site.

This sequence belongs to the oligoribonuclease family.

Functionally, 3'-to-5' exoribonuclease specific for small oligoribonucleotides. The chain is Probable oligoribonuclease from Caenorhabditis elegans.